Reading from the N-terminus, the 208-residue chain is Ribosomal RNA small subunit methyltransferase G (208 aa).

Residues G77, L82, 128 to 129 (VE), and R142 each bind S-adenosyl-L-methionine.

The protein belongs to the methyltransferase superfamily. RNA methyltransferase RsmG family.

Its subcellular location is the cytoplasm. The enzyme catalyses guanosine(527) in 16S rRNA + S-adenosyl-L-methionine = N(7)-methylguanosine(527) in 16S rRNA + S-adenosyl-L-homocysteine. Functionally, specifically methylates the N7 position of guanine in position 527 of 16S rRNA. This is Ribosomal RNA small subunit methyltransferase G from Chromohalobacter salexigens (strain ATCC BAA-138 / DSM 3043 / CIP 106854 / NCIMB 13768 / 1H11).